A 183-amino-acid chain; its full sequence is MTSFPHPSTSESGPDPDSEPNREEQAHAYCLRLLTARARTRAELAGKLTQRGYDEPVVARVLDRLVDVGLVDDEDFAEQWVRSRHLYAGKGKRALAAELRRKGVDDEVISSSLADIDAGAERDRAERLVRDRLRREKLDDEPGSDLKVKRRLAGMLARRGYSQSMALDVVTVELAGERERRRV.

Over residues 1–12 (MTSFPHPSTSES) the composition is skewed to polar residues. The interval 1–26 (MTSFPHPSTSESGPDPDSEPNREEQA) is disordered.

The protein belongs to the RecX family.

It is found in the cytoplasm. Its function is as follows. Modulates RecA activity. The polypeptide is Regulatory protein RecX (Mycobacterium sp. (strain KMS)).